A 367-amino-acid polypeptide reads, in one-letter code: DNA replication and repair protein RecF (367 aa).

31-38 (GENGSGKT) lines the ATP pocket.

Belongs to the RecF family.

The protein resides in the cytoplasm. In terms of biological role, the RecF protein is involved in DNA metabolism; it is required for DNA replication and normal SOS inducibility. RecF binds preferentially to single-stranded, linear DNA. It also seems to bind ATP. In Saccharophagus degradans (strain 2-40 / ATCC 43961 / DSM 17024), this protein is DNA replication and repair protein RecF.